Reading from the N-terminus, the 155-residue chain is Small ribosomal subunit protein uS7c (155 aa).

The protein belongs to the universal ribosomal protein uS7 family. In terms of assembly, part of the 30S ribosomal subunit.

The protein resides in the plastid. Its subcellular location is the chloroplast. In terms of biological role, one of the primary rRNA binding proteins, it binds directly to 16S rRNA where it nucleates assembly of the head domain of the 30S subunit. This is Small ribosomal subunit protein uS7c (rps7) from Physcomitrium patens (Spreading-leaved earth moss).